The primary structure comprises 224 residues: Transposase for insertion sequence-like element IS431mec (224 aa).

Residues 33–52 constitute a DNA-binding region (H-T-H motif); the sequence is EILRERGVNVHHSTVYRWVQ. The region spanning 73–222 is the Integrase catalytic domain; that stretch reads WRIDETYIKI…SPCHEISIML (150 aa).

Functionally, involved in the transposition of the insertion sequence. The sequence is that of Transposase for insertion sequence-like element IS431mec (tnp) from Staphylococcus aureus (strain NCTC 8325 / PS 47).